The following is a 249-amino-acid chain: MFEDLKPHLQELRKRLMVSVGTILVAFLGCFHFWKNIFEFVKNSYKGTLIQLSPIEGVMVAVKISFSAAIVISMPIIFWQLWLFIAPGLYKNEKKVILPFVFFGSGMFLMGAAFSYYVVFPFIIEYLATFGSDVFAANISASSYVSFFTRLILGFGVAFELPVLAYFLAKVGLITDASLKAYFKYAIVVIFIVAAIITPPDVVSQIFMALPLVGLYGLSILIAKMVNPAPKDNENDHENDAKEHTKSES.

Transmembrane regions (helical) follow at residues 18–38 (VSVG…KNIF), 69–89 (AIVI…APGL), 96–116 (VILP…AFSY), 151–171 (LILG…LAKV), 187–207 (IVVI…SQIF), and 208–228 (MALP…MVNP).

This sequence belongs to the TatC family. In terms of assembly, the Tat system comprises two distinct complexes: a TatABC complex, containing multiple copies of TatA, TatB and TatC subunits, and a separate TatA complex, containing only TatA subunits. Substrates initially bind to the TatABC complex, which probably triggers association of the separate TatA complex to form the active translocon.

It localises to the cell inner membrane. Functionally, part of the twin-arginine translocation (Tat) system that transports large folded proteins containing a characteristic twin-arginine motif in their signal peptide across membranes. Together with TatB, TatC is part of a receptor directly interacting with Tat signal peptides. This chain is Sec-independent protein translocase protein TatC, found in Helicobacter pylori (strain J99 / ATCC 700824) (Campylobacter pylori J99).